The sequence spans 293 residues: tRNA pseudouridine synthase B (293 aa).

The active-site Nucleophile is the Asp38.

This sequence belongs to the pseudouridine synthase TruB family. Type 1 subfamily.

It catalyses the reaction uridine(55) in tRNA = pseudouridine(55) in tRNA. In terms of biological role, responsible for synthesis of pseudouridine from uracil-55 in the psi GC loop of transfer RNAs. The sequence is that of tRNA pseudouridine synthase B from Microcystis aeruginosa (strain NIES-843 / IAM M-2473).